The following is an 828-amino-acid chain: Glycerol-3-phosphate acyltransferase 1, mitochondrial (828 aa).

Residues 1–87 (MEESSVTIGT…FFNPSIPSLG (87 aa)) lie on the Cytoplasmic side of the membrane. The interval 80-120 (NPSIPSLGLRNVIYINETHTRHRGWLARRLSYILFVQERDV) is important for mitochondrial localization. An intramembrane segment occupies 88-118 (LRNVIYINETHTRHRGWLARRLSYILFVQER). At 119–828 (DVHKGMFATS…LEYILSFVVL (710 aa)) the chain is on the cytoplasmic side. The short motif at 230 to 235 (HRSHID) is the HXXXXD motif element. 5 residues coordinate CoA: arginine 278, arginine 279, lysine 288, arginine 293, and arginine 328. Phosphoserine is present on serine 380. CoA is bound at residue arginine 462. 2 positions are modified to phosphoserine: serine 688 and serine 695. An N6-acetyllysine mark is found at lysine 780 and lysine 784.

It belongs to the GPAT/DAPAT family.

It localises to the mitochondrion outer membrane. It catalyses the reaction sn-glycerol 3-phosphate + an acyl-CoA = a 1-acyl-sn-glycero-3-phosphate + CoA. The catalysed reaction is sn-glycerol 3-phosphate + hexadecanoyl-CoA = 1-hexadecanoyl-sn-glycero-3-phosphate + CoA. It carries out the reaction (9Z,12Z)-octadecadienoyl-CoA + sn-glycerol 3-phosphate = 1-(9Z,12Z)-octadecadienoyl-sn-glycero-3-phosphate + CoA. The enzyme catalyses sn-glycerol 3-phosphate + (9Z)-octadecenoyl-CoA = 1-(9Z-octadecenoyl)-sn-glycero-3-phosphate + CoA. It catalyses the reaction sn-glycerol 3-phosphate + octadecanoyl-CoA = 1-octadecanoyl-sn-glycero-3-phosphate + CoA. The catalysed reaction is dodecanoyl-CoA + sn-glycerol 3-phosphate = 1-dodecanoyl-sn-glycerol 3-phosphate + CoA. It carries out the reaction 1-acyl-sn-glycero-3-phospho-(1'-sn-glycerol) + an acyl-CoA = a 1,2-diacyl-sn-glycero-3-phospho-(1'-sn-glycerol) + CoA. Its pathway is phospholipid metabolism; CDP-diacylglycerol biosynthesis; CDP-diacylglycerol from sn-glycerol 3-phosphate: step 1/3. In terms of biological role, mitochondrial membrane protein that catalyzes the essential first step of biosynthesis of glycerolipids such as triglycerides, phosphatidic acids and lysophosphatidic acids. Esterifies acyl-group from acyl-coenzyme A (acyl-CoA) to the sn-1 position of glycerol-3-phosphate, to produce lysophosphatidic acid. Has a narrow hydrophobic binding cleft that selects for a linear acyl chain. Catalytic activity is higher for substrates with a 16-carbon acyl chain. In Rattus norvegicus (Rat), this protein is Glycerol-3-phosphate acyltransferase 1, mitochondrial.